Reading from the N-terminus, the 97-residue chain is Co-chaperonin GroES (97 aa).

The protein belongs to the GroES chaperonin family. As to quaternary structure, heptamer of 7 subunits arranged in a ring. Interacts with the chaperonin GroEL.

Its subcellular location is the cytoplasm. In terms of biological role, together with the chaperonin GroEL, plays an essential role in assisting protein folding. The GroEL-GroES system forms a nano-cage that allows encapsulation of the non-native substrate proteins and provides a physical environment optimized to promote and accelerate protein folding. GroES binds to the apical surface of the GroEL ring, thereby capping the opening of the GroEL channel. This is Co-chaperonin GroES from Blochmanniella pennsylvanica (strain BPEN).